The sequence spans 455 residues: Ribulose bisphosphate carboxylase large chain (455 aa).

K5 bears the N6,N6,N6-trimethyllysine mark. N114 and T164 together coordinate substrate. K166 functions as the Proton acceptor in the catalytic mechanism. K168 is a binding site for substrate. Mg(2+)-binding residues include K192, D194, and E195. An N6-carboxylysine modification is found at K192. Catalysis depends on H285, which acts as the Proton acceptor. Substrate contacts are provided by R286, H318, and S370.

This sequence belongs to the RuBisCO large chain family. Type I subfamily. As to quaternary structure, heterohexadecamer of 8 large chains and 8 small chains; disulfide-linked. The disulfide link is formed within the large subunit homodimers. Requires Mg(2+) as cofactor. Post-translationally, the disulfide bond which can form in the large chain dimeric partners within the hexadecamer appears to be associated with oxidative stress and protein turnover.

Its subcellular location is the plastid. The protein resides in the chloroplast. The enzyme catalyses 2 (2R)-3-phosphoglycerate + 2 H(+) = D-ribulose 1,5-bisphosphate + CO2 + H2O. It catalyses the reaction D-ribulose 1,5-bisphosphate + O2 = 2-phosphoglycolate + (2R)-3-phosphoglycerate + 2 H(+). RuBisCO catalyzes two reactions: the carboxylation of D-ribulose 1,5-bisphosphate, the primary event in carbon dioxide fixation, as well as the oxidative fragmentation of the pentose substrate in the photorespiration process. Both reactions occur simultaneously and in competition at the same active site. This Lupinus digitatus (Lupine) protein is Ribulose bisphosphate carboxylase large chain.